We begin with the raw amino-acid sequence, 100 residues long: Urease subunit gamma (100 aa).

Belongs to the urease gamma subunit family. As to quaternary structure, heterotrimer of UreA (gamma), UreB (beta) and UreC (alpha) subunits. Three heterotrimers associate to form the active enzyme.

The protein resides in the cytoplasm. It catalyses the reaction urea + 2 H2O + H(+) = hydrogencarbonate + 2 NH4(+). The protein operates within nitrogen metabolism; urea degradation; CO(2) and NH(3) from urea (urease route): step 1/1. The sequence is that of Urease subunit gamma from Clostridium perfringens.